The primary structure comprises 151 residues: MGRMHAPGKGLSQSALPYRRSVPTWLKLTSDDVKEQIYKLAKKGLTPSQIGVILRDSHGVAQVRFVTGNKILRILKSKGLAPDLPEDLYHLIKKAVAVRKHLERNRKDKDAKFRLILIESRIHRLARYYKTRRVLPPNWKYESSTASALVA.

It belongs to the universal ribosomal protein uS15 family. As to quaternary structure, component of the small ribosomal subunit.

It localises to the cytoplasm. In terms of biological role, component of the small ribosomal subunit. The ribosome is a large ribonucleoprotein complex responsible for the synthesis of proteins in the cell. The chain is Small ribosomal subunit protein uS15 (rps13) from Xenopus laevis (African clawed frog).